The chain runs to 309 residues: Methionyl-tRNA formyltransferase (309 aa).

109-112 (SLLP) lines the (6S)-5,6,7,8-tetrahydrofolate pocket.

It belongs to the Fmt family.

It catalyses the reaction L-methionyl-tRNA(fMet) + (6R)-10-formyltetrahydrofolate = N-formyl-L-methionyl-tRNA(fMet) + (6S)-5,6,7,8-tetrahydrofolate + H(+). Its function is as follows. Attaches a formyl group to the free amino group of methionyl-tRNA(fMet). The formyl group appears to play a dual role in the initiator identity of N-formylmethionyl-tRNA by promoting its recognition by IF2 and preventing the misappropriation of this tRNA by the elongation apparatus. The sequence is that of Methionyl-tRNA formyltransferase from Clostridium novyi (strain NT).